Here is a 196-residue protein sequence, read N- to C-terminus: Imidazole glycerol phosphate synthase subunit HisH (196 aa).

Residues 2-196 form the Glutamine amidotransferase type-1 domain; it reads NIVIIDTNCS…QQLVKNFLEI (195 aa). Cys-77 serves as the catalytic Nucleophile. Catalysis depends on residues His-178 and Glu-180.

As to quaternary structure, heterodimer of HisH and HisF.

The protein localises to the cytoplasm. The enzyme catalyses 5-[(5-phospho-1-deoxy-D-ribulos-1-ylimino)methylamino]-1-(5-phospho-beta-D-ribosyl)imidazole-4-carboxamide + L-glutamine = D-erythro-1-(imidazol-4-yl)glycerol 3-phosphate + 5-amino-1-(5-phospho-beta-D-ribosyl)imidazole-4-carboxamide + L-glutamate + H(+). It carries out the reaction L-glutamine + H2O = L-glutamate + NH4(+). It participates in amino-acid biosynthesis; L-histidine biosynthesis; L-histidine from 5-phospho-alpha-D-ribose 1-diphosphate: step 5/9. Functionally, IGPS catalyzes the conversion of PRFAR and glutamine to IGP, AICAR and glutamate. The HisH subunit catalyzes the hydrolysis of glutamine to glutamate and ammonia as part of the synthesis of IGP and AICAR. The resulting ammonia molecule is channeled to the active site of HisF. In Blochmanniella pennsylvanica (strain BPEN), this protein is Imidazole glycerol phosphate synthase subunit HisH.